Reading from the N-terminus, the 301-residue chain is Formylmethanofuran--tetrahydromethanopterin formyltransferase (301 aa).

Belongs to the FTR family. In terms of assembly, homotetramer.

It localises to the cytoplasm. The catalysed reaction is N-formylmethanofuran + 5,6,7,8-tetrahydromethanopterin + H(+) = N(5)-formyl-5,6,7,8-tetrahydromethanopterin + methanofuran. It participates in one-carbon metabolism; methanogenesis from CO(2); 5,10-methenyl-5,6,7,8-tetrahydromethanopterin from CO(2): step 2/3. Its function is as follows. Catalyzes the reversible transfer of a formyl group from formylmethanofuran (formyl-MFR) to tetrahydromethanopterin (H(4)MPT) to produce 5-formyl tetrahydromethanopterin (5-formyl-H(4)MPT) and methanofuran (MFR). This Methanocaldococcus jannaschii (strain ATCC 43067 / DSM 2661 / JAL-1 / JCM 10045 / NBRC 100440) (Methanococcus jannaschii) protein is Formylmethanofuran--tetrahydromethanopterin formyltransferase.